The chain runs to 103 residues: MFDKMNLGDLGKVFEEIQERAKKLQEEQESKSFIAKSGGGLIKVTANGKGEIIDIEIDDSLLEDKDSLQILLISAINDVLKMVEEDKQRSALSMMTPDIFGQK.

Belongs to the YbaB/EbfC family. Homodimer.

It localises to the cytoplasm. Its subcellular location is the nucleoid. In terms of biological role, binds to DNA and alters its conformation. May be involved in regulation of gene expression, nucleoid organization and DNA protection. This is Nucleoid-associated protein NIS_0256 from Nitratiruptor sp. (strain SB155-2).